Reading from the N-terminus, the 934-residue chain is Serine/threonine-protein kinase PknD (934 aa).

The region spanning 4-296 (YELIRLIGKG…ELRQALQPYL (293 aa)) is the Protein kinase domain. ATP-binding positions include 10–18 (IGKGGMGEV) and Lys-33. Catalysis depends on Asp-138, which acts as the Proton acceptor.

It belongs to the protein kinase superfamily. Ser/Thr protein kinase family. Autophosphorylated on serine and threonine residues.

It catalyses the reaction L-seryl-[protein] + ATP = O-phospho-L-seryl-[protein] + ADP + H(+). The catalysed reaction is L-threonyl-[protein] + ATP = O-phospho-L-threonyl-[protein] + ADP + H(+). Functionally, together with the serine/threonine kinase Pkn1, may play a role in the specific interactions with host proteins during intracellular growth. In Chlamydia trachomatis serovar A (strain ATCC VR-571B / DSM 19440 / HAR-13), this protein is Serine/threonine-protein kinase PknD.